The chain runs to 906 residues: Cadherin-2 (906 aa).

A signal peptide spans 1 to 25; it reads MCRIAGAPRTLLPLLAALLQASVEA. Residues 26–159 constitute a propeptide that is removed on maturation; sequence SGEIALCKTG…HSGALQRQKR (134 aa). 5 Cadherin domains span residues 160 to 267, 268 to 382, 383 to 497, 498 to 603, and 604 to 717; these read DWVI…RPEF, LHQV…PPEF, TAMT…NPYF, APNP…DNAP, and QVLP…RIVG. Residues 160-724 lie on the Extracellular side of the membrane; sequence DWVIPPINLP…IVGAGLGTGA (565 aa). Glu-170 provides a ligand contact to Ca(2+). A glycan (N-linked (GlcNAc...) asparagine) is linked at Asn-190. Ca(2+)-binding residues include Asp-226, Glu-228, Asp-259, Met-260, Asn-261, Asp-262, and Asn-263. Asn-273 carries an N-linked (GlcNAc...) asparagine glycan. Ca(2+) is bound by residues Asp-293, Asp-295, and Asn-301. An N-linked (GlcNAc...) asparagine glycan is attached at Asn-325. Ca(2+) is bound at residue Asp-353. Residues Asn-402, Asn-572, Asn-651, and Asn-692 are each glycosylated (N-linked (GlcNAc...) asparagine). A helical membrane pass occupies residues 725–745; the sequence is IIAILLCIIILLILVLMFVVW. The Cytoplasmic portion of the chain corresponds to 746 to 906; it reads MKRRDKERQA…LADMYGGGDD (161 aa). Low complexity predominate over residues 863–880; that stretch reads SGSTAGSLSSLNSSSSGG. Residues 863–883 form a disordered region; sequence SGSTAGSLSSLNSSSSGGDQD.

As to quaternary structure, homodimer (via extracellular region). Can also form heterodimers with other cadherins (via extracellular region). Dimerization occurs in trans, i.e. with a cadherin chain from another cell. Interacts with CDCP1. Interacts with PCDH8; this complex may also include TAOK2. The interaction with PCDH8 may lead to internalization through TAOK2/p38 MAPK pathway. Identified in a complex containing FGFR4, NCAM1, CDH2, PLCG1, FRS2, SRC, SHC1, GAP43 and CTTN. May interact with OBSCN (via protein kinase domain 2). Interacts with FBXO45. Cleaved by MMP24. Ectodomain cleavage leads to the generation of a soluble 90 kDa N-terminal soluble fragment and a 45 kDa membrane-bound C-terminal fragment 1 (CTF1), which is further cleaved by gamma-secretase into a 35 kDa. Cleavage in neural stem cells by MMP24 affects CDH2-mediated anchorage of neural stem cells to ependymocytes in the adult subependymal zone, leading to modulate neural stem cell quiescence. Post-translationally, may be phosphorylated by OBSCN. In terms of processing, O-glycosylated on Ser and Thr residues. In terms of tissue distribution, expressed in cardiac muscle (at protein level).

The protein localises to the cell membrane. It localises to the sarcolemma. The protein resides in the cell junction. It is found in the adherens junction. Its subcellular location is the desmosome. The protein localises to the cell surface. Functionally, calcium-dependent cell adhesion protein; preferentially mediates homotypic cell-cell adhesion by dimerization with a CDH2 chain from another cell. Cadherins may thus contribute to the sorting of heterogeneous cell types. Acts as a regulator of neural stem cells quiescence by mediating anchorage of neural stem cells to ependymocytes in the adult subependymal zone: upon cleavage by MMP24, CDH2-mediated anchorage is affected, leading to modulate neural stem cell quiescence. Plays a role in cell-to-cell junction formation between pancreatic beta cells and neural crest stem (NCS) cells, promoting the formation of processes by NCS cells. Required for proper neurite branching. Required for pre- and postsynaptic organization. CDH2 may be involved in neuronal recognition mechanism. In hippocampal neurons, may regulate dendritic spine density. This Mus musculus (Mouse) protein is Cadherin-2 (Cdh2).